Consider the following 314-residue polypeptide: Homoserine O-acetyltransferase (314 aa).

Cysteine 142 (acyl-thioester intermediate) is an active-site residue. The substrate site is built by lysine 163 and serine 192. Histidine 235 acts as the Proton acceptor in catalysis. Glutamate 237 is an active-site residue. Arginine 249 provides a ligand contact to substrate.

The protein belongs to the MetA family.

Its subcellular location is the cytoplasm. It catalyses the reaction L-homoserine + acetyl-CoA = O-acetyl-L-homoserine + CoA. It participates in amino-acid biosynthesis; L-methionine biosynthesis via de novo pathway; O-acetyl-L-homoserine from L-homoserine: step 1/1. Transfers an acetyl group from acetyl-CoA to L-homoserine, forming acetyl-L-homoserine. The sequence is that of Homoserine O-acetyltransferase from Streptococcus pneumoniae serotype 19F (strain G54).